A 496-amino-acid chain; its full sequence is L-arabinose isomerase (496 aa).

Mn(2+)-binding residues include E302, E329, H346, and H445.

This sequence belongs to the arabinose isomerase family. Requires Mn(2+) as cofactor.

The enzyme catalyses beta-L-arabinopyranose = L-ribulose. Its pathway is carbohydrate degradation; L-arabinose degradation via L-ribulose; D-xylulose 5-phosphate from L-arabinose (bacterial route): step 1/3. Catalyzes the conversion of L-arabinose to L-ribulose. The polypeptide is L-arabinose isomerase (Thermotoga petrophila (strain ATCC BAA-488 / DSM 13995 / JCM 10881 / RKU-1)).